Here is a 480-residue protein sequence, read N- to C-terminus: Serine/threonine-protein kinase WAG2 (480 aa).

One can recognise a Protein kinase domain in the interval 88 to 396 (LKLIRHLGTG…AQDIKRHPFF (309 aa)). ATP-binding positions include 94-102 (LGTGNLGRV) and Lys117. Asp213 acts as the Proton acceptor in catalysis.

It belongs to the protein kinase superfamily. Ser/Thr protein kinase family. In terms of tissue distribution, expressed in root tips, lateral root primordia and emerging true leaf primordia.

The protein localises to the cytoplasm. The protein resides in the cytosol. It carries out the reaction L-seryl-[protein] + ATP = O-phospho-L-seryl-[protein] + ADP + H(+). It catalyses the reaction L-threonyl-[protein] + ATP = O-phospho-L-threonyl-[protein] + ADP + H(+). Functionally, serine/threonine-protein kinase involved in the regulation of auxin signaling. Acts as a positive regulator of cellular auxin efflux and regulates organ development by enhancing PIN-mediated polar auxin transport. Phosphorylates conserved serine residues in the PIN auxin efflux carriers. Phosphorylation of PIN proteins is required and sufficient for apical-basal PIN polarity that enables directional intercellular auxin fluxes, which mediate differential growth, tissue patterning and organogenesis. Acts as a suppressor of root waving. The chain is Serine/threonine-protein kinase WAG2 (WAG2) from Arabidopsis thaliana (Mouse-ear cress).